Consider the following 394-residue polypeptide: Mannosyl-3-phosphoglycerate synthase (394 aa).

It belongs to the glycosyltransferase 2 family.

It is found in the cytoplasm. It carries out the reaction (2R)-3-phosphoglycerate + GDP-alpha-D-mannose = 2-O-(alpha-D-mannosyl)-3-phosphoglycerate + GDP + H(+). It participates in carbohydrate biosynthesis; 2-(alpha-D-mannosyl)-D-glycerate biosynthesis; 2-(alpha-D-mannosyl)-D-glycerate from GDP-alpha-D-mannose (MPG route): step 1/2. Its function is as follows. Transfers a mannosyl group from GDP-mannose to phosphoglycerate to form mannosyl-3-phosphoglycerate (MPG). The chain is Mannosyl-3-phosphoglycerate synthase (mngA) from Pyrococcus furiosus (strain ATCC 43587 / DSM 3638 / JCM 8422 / Vc1).